The sequence spans 2622 residues: MAHAASQLKKNRDLEINAEEETEKKKKHRKRSRDRKKKSDANASYLRAARAGHLEKALDYIKNGVDVNICNQNGLNALHLASKEGHVEVVSELLQREANVDAATKKGNTALHIASLAGQAEVVKVLVTNGANVNAQSQNGFTPLYMAAQENHLEVVRFLLDNGASQSLATEDGFTPLAVALQQGHDQVVSLLLENDTKGKVRLPALHIAARKDDTKAAALLLQNDTNADIESKMVVNRATESGFTPLHIAAHYGNINVATLLLNRAAAVDFTARNDITPLHVASKRGNANMVKLLLDRGAKIDAKTRDGLTPLHCGARSGHEQVVEMLLDRAAPILSKTKNGLSPLHMATQGDHLNCVQLLLQHNVPVDDVTNDYLTALHVAAHCGHYKVAKVLLDKKANPNAKALNGFTPLHIACKKNRIRVMELLLKHGASIQAVTESGLTPIHVAAFMGHVNIVSQLMHHGASPNTTNVRGETALHMAARSGQAEVVRYLVQDGAQVEAKAKDDQTPLHISARLGKADIVQQLLQQGASPNAATTSGYTPLHLSAREGHEDVAAFLLDHGASLSITTKKGFTPLHVAAKYGKLEVASLLLQKSASPDAAGKSGLTPLHVAAHYDNQKVALLLLDQGASPHAAAKNGYTPLHIAAKKNQMDIATSLLEYGADANAVTRQGIASVHLAAQEGHVDMVSLLLSRNANVNLSNKSGLTPLHLAAQEDRVNVAEVLVNQGAHVDAQTKMGYTPLHVGCHYGNIKIVNFLLQHSAKVNAKTKNGYTPLHQAAQQGHTHIINVLLQNNASPNELTVNGNTALAIARRLGYISVVDTLKVVTEEIMTTTTITEKHKMNVPETMNEVLDMSDDEVGKASAPEKLSDGEYISDGEEGEDAITGDTDKYLGPQDLKELGDDSLPAEGYVGFSLGARSASLRSFSSDRSYTLNRSSYARDSMMIEELLVPSKEQHLPFTREFDSDSLRHYSWAADTLDNVNLVSSPVHSGFLVSFMVDARGGSMRGSRHHGMRIIIPPRKCTAPTRITCRLVKRHKLANPPPMVEGEGLASRLVEMGPAGAQFLGPVIVEIPHFGSMRGKERELIVLRSENGETWKEHQFDSKNEDLSELLNGMDEELDSPEELGTKRICRIITKDFPQYFAVVSRIKQESNQIGPEGGILSSTTVPLVQASFPEGALTKRIRVGLQAQPVPEETVKKILGNKATFSPIVTVEPRRRKFHKPITMTIPVPPPSGEGVSNGYKGDTTPSLRLLCSITGGTSPAQWEDITGTTPLTFIKDCVSFTTNVSARFWLADCHQVLETVGLASQLYRELICVPYMAKFVVFAKTNDPVESSLRCFCMTDDRVDKTLEQQENFEEVARSKDIEVLEGKPIYVDCYGNLAPLTKGGQQLVFNFYSFKENRLPFSIKVRDTSQEPCGRLSFLKEPKTTKGLPQTAVCNLNITLPAHKKAEKADRRQSFTSLALRKRYSYLTEPSMKTVERSSGTARSLPTTYSHKPFFSTRPYQSWTTTPITVPGPAKSGSLSSSPSNTPSASPLKSIWSVSTPSPIKSTLGASTTSSVKSISDVASPIRSFRTISSPIRTVASPSPYNTQVASGTLGRVPTITEATPIKGVAPNSTLSSRTSPVTTAGSLLEKSSITMTPPASPKANITMYSSSLPFKSIITSAAPLISSPLKSVVSPTKSAADVISTAKAAMASTLSSPLKQMSGHAEVALVNGSVSPLKYPSSSALINGCKATATLQDKISTATNAVSSVVSAAPDTVEKALSTTTAMPFSPLRSYVSAAAPSAFQSLRAPSASALYNSLGPSVGVTTSSVTSSIITVPVYSVGNVLAEPALKKLPDSNSLTKSAAALLSPIKTLTTETRPQPHFNRTSSPVKSSLFLASSALKPSVPSSLSSSQEILKDVAEMKEDLMRMTAILQTDVPEEKPFQTDLPREGRIDDEEPFKIVEKVKEDLVKVSEILKKDVCVESKGPPKSPKSDKGHSPEDDWTEFSSEEIREARQAAASHAPSLPERVHGKANLTRVIDYLTNDIGSSSLTNLKYKFEEAKKEGEERQKRILKPAMALQEHKLKMPPASMRPSTSEKELCKMADSFFGTDAILESPDDFSQHDQDKSPLSDSGFETRSEKTPSAPQSAESTGPKPLFHEVPIPPVITETRTEVVHVIRSYEPSTGEIPQSQPEDPVSPKPPPTFMELEPKPTALSIKEKVKAFQMKASSEEEDHSRVLSKGMRVKEETHITTTTRMVYHSPPGSECASERIEETMSVHDIMKAFQSGRDPSKELAGLFEHKSAMSPDVAKSAAETSAQHAEKDNQMKPKLERIIEVHIEKGPQSPCERTDIRMAIVADHLGLSWTELARELNFSVDEINQIRVENPNSLISQSFMLLKKWVTRDGKNATTDALTSVLTKINRIDIVTLLEGPIFDYGNISGTRSFADENNVFHDPVDGWQNETPSGSLESPAQARRITGGLLDRLDDSSDQVRDPITSYLTGEAGKFEANGNHAEVIPEAKAKAYFPESQNDIGKQSIKENLKPKTHGCGRAEEPVSPLTAYQKSLEETSKLVIEDAPKPCVPVGMKKMTRTPADGKARLNLQEEEGSARSEPKQGEGYKVKTKKEIRNVEKKAH.

Residues 1-44 (MAHAASQLKKNRDLEINAEEETEKKKKHRKRSRDRKKKSDANAS) form a disordered region. Residues 25–38 (KKKHRKRSRDRKKK) show a composition bias toward basic residues. Residue serine 39 is modified to Phosphoserine. ANK repeat units lie at residues 73–102 (NGLN…NVDA), 106–135 (KGNT…NVNA), 139–168 (NGFT…SQSL), 172–201 (DGFT…KGKV), 203–230 (LPAL…NADI), 242–271 (SGFT…AVDF), 275–304 (NDIT…KIDA), 308–337 (DGLT…PILS), 341–370 (NGLS…PVDD), 374–403 (DYLT…NPNA), 407–436 (NGFT…SIQA), 440–469 (SGLT…SPNT), 473–502 (RGET…QVEA), 506–535 (DDQT…SPNA), 539–568 (SGYT…SLSI), 572–601 (KGFT…SPDA), 605–634 (SGLT…SPHA), 638–667 (NGYT…DANA), 671–700 (QGIA…NVNL), 704–733 (SGLT…HVDA), 737–766 (MGYT…KVNA), 770–799 (NGYT…SPNE), and 803–832 (NGNT…EIMT). Serine 631 is modified (phosphoserine). Phosphoserine occurs at positions 851, 855, 869, 875, 921, 924, 930, 965, 967, and 1121. The tract at residues 868–889 (LSDGEYISDGEEGEDAITGDTD) is disordered. Acidic residues predominate over residues 873 to 884 (YISDGEEGEDAI). 2 ZU5 domains span residues 992-1147 (FLVS…VVSR) and 1149-1296 (KQES…LADC). A phosphoserine mark is found at serine 1458 and serine 1469. The tract at residues 1510–1539 (TPITVPGPAKSGSLSSSPSNTPSASPLKSI) is disordered. A compositionally biased stretch (low complexity) spans 1515-1536 (PGPAKSGSLSSSPSNTPSASPL). A phosphoserine mark is found at serine 1621, serine 1624, serine 1679, serine 1984, serine 2102, serine 2114, and serine 2117. Disordered stretches follow at residues 1968 to 1992 (VESK…WTEF), 2099 to 2147 (ILES…FHEV), and 2292 to 2312 (SPDV…KDNQ). The span at 1977–1986 (PKSDKGHSPE) shows a compositional bias: basic and acidic residues. The segment covering 2106–2127 (FSQHDQDKSPLSDSGFETRSEK) has biased composition (basic and acidic residues). Residues 2128–2137 (TPSAPQSAES) are compositionally biased toward polar residues. The Death domain occupies 2336 to 2420 (TDIRMAIVAD…DIVTLLEGPI (85 aa)). 3 positions are modified to phosphoserine: serine 2457, serine 2475, and serine 2544. The tract at residues 2568 to 2622 (CVPVGMKKMTRTPADGKARLNLQEEEGSARSEPKQGEGYKVKTKKEIRNVEKKAH) is disordered. A compositionally biased stretch (basic and acidic residues) spans 2594–2622 (GSARSEPKQGEGYKVKTKKEIRNVEKKAH).

As to quaternary structure, may be a constituent of a NFASC/NRCAM/ankyrin G complex. Interacts with RHBG. Directly interacts with DMD and betaDAG1; this interaction does not interfere with DMD-binding and is required for DMD and betaDAG1 retention at costameres. Interacts (via N-terminal ANK repeats) with SCHIP1 isoform 7 (via C-terminus); this interaction is required for the localization at axon initial segments (AISs) and nodes of Ranvier (NRs). Interacts with PLEC and FLNC. Interacts (via ANK repeats) with IQCJ-SCHIP1; required for IQCJ-SCHIP1 localization at axon initial segments (AIS) and nodes of Ranvier. Interacts with SCHIP1. Interacts with KCNA1; this inhibits channel activity. Interacts with SCN5A. Interacts with PKP2 and GJA1/CX43. In terms of assembly, interacts (via its C-terminal muscle-specific Obscurin/Titin-Binding-related domain sequence) with PLEC and FLNC. Expressed in the heart (at protein level). Expressed in skeletal muscle (at protein level). Expressed at highest levels in brain and testis, followed by skin, kidney, liver and spleen. As to expression, may be specifically expressed in muscle tissues, including heart and skeletal muscle (extensor digitorum longus) (at protein level). In terms of tissue distribution, expressed in skeletal muscle, brain, lung, heart, testes and kidney.

The protein resides in the cytoplasm. It localises to the cytoskeleton. Its subcellular location is the cell projection. It is found in the axon. The protein localises to the cell membrane. The protein resides in the sarcolemma. It localises to the postsynaptic cell membrane. Its subcellular location is the lysosome. It is found in the T-tubule. Membrane-cytoskeleton linker. May participate in the maintenance/targeting of ion channels and cell adhesion molecules at the nodes of Ranvier and axonal initial segments. In skeletal muscle, required for costamere localization of DMD and betaDAG1. Regulates KCNA1 channel activity in function of dietary Mg(2+) levels, and thereby contributes to the regulation of renal Mg(2+) reabsorption. Required for intracellular adhesion and junctional conductance in myocytes, potentially via stabilization of GJA1/CX43 protein abundance and promotion of PKP2, GJA1/CX43, and SCN5A/Nav1.5 localization to cell-cell junctions. This chain is Ankyrin-3 (Ank3), found in Rattus norvegicus (Rat).